Here is a 128-residue protein sequence, read N- to C-terminus: Glycine cleavage system H protein (128 aa).

Residues 24 to 106 enclose the Lipoyl-binding domain; that stretch reads VFCVGITDHA…YDEGWLFRIR (83 aa). An N6-lipoyllysine modification is found at lysine 65.

The protein belongs to the GcvH family. As to quaternary structure, the glycine cleavage system is composed of four proteins: P, T, L and H. The cofactor is (R)-lipoate.

The glycine cleavage system catalyzes the degradation of glycine. The H protein shuttles the methylamine group of glycine from the P protein to the T protein. This Edwardsiella ictaluri (strain 93-146) protein is Glycine cleavage system H protein.